We begin with the raw amino-acid sequence, 552 residues long: uncharacterized protein (552 aa).

Residues 8-200 (KLFADMIIQG…LLCVYEGFLK (193 aa)) enclose the DhaL domain.

This is an uncharacterized protein from Staphylococcus haemolyticus (strain JCSC1435).